The chain runs to 123 residues: Large ribosomal subunit protein eL8 (123 aa).

It belongs to the eukaryotic ribosomal protein eL8 family. In terms of assembly, part of the 50S ribosomal subunit. Probably part of the RNase P complex.

The protein resides in the cytoplasm. In terms of biological role, multifunctional RNA-binding protein that recognizes the K-turn motif in ribosomal RNA, the RNA component of RNase P, box H/ACA, box C/D and box C'/D' sRNAs. In Methanopyrus kandleri (strain AV19 / DSM 6324 / JCM 9639 / NBRC 100938), this protein is Large ribosomal subunit protein eL8.